We begin with the raw amino-acid sequence, 212 residues long: Suppressor of cytokine signaling 1 (212 aa).

Positions 1-55 are disordered; the sequence is MVARNQVAADNAISPAAEPRRRSEPSSSSSSSSPAAPVRPRPCPAVPAPAPGDTH. Low complexity predominate over residues 25–36; the sequence is PSSSSSSSSPAA. The segment covering 37-50 has biased composition (pro residues); it reads PVRPRPCPAVPAPA. The kinase inhibitory region (KIR) stretch occupies residues 56-67; sequence FRTFRSHSDYRR. The interval 68-79 is extended SH2 subdomain (ESS); sequence ITRTSALLDACG. The region spanning 80-175 is the SH2 domain; sequence FYWGPLSVHG…PLRQRRVRPL (96 aa). The region spanning 162-211 is the SOCS box domain; the sequence is MLGAPLRQRRVRPLQELCRQRIVAAVGRENLARIPLNPVLRDYLSSFPFQ. The interval 174 to 183 is interaction with Elongin BC complex; sequence PLQELCRQRI.

It belongs to the SOCS1 family. As to quaternary structure, interacts with multiple activated proteins of the tyrosine kinase signaling pathway including JAK family kinases, TEC, KIT, GRB2 and VAV. Binding to JAKs is mediated through the KIR and SH2 domain to a phosphorylated tyrosine residue within the JAK JH1 domain. Binds the SH3 domain of GRB2 via diproline determinants in the N-terminus, and the N-terminal regulatory domain of VAV. Interacts with the Elongin BC complex (ELOB and ELOC). Component of an ECS CBC(SOCS1) E3 ubiquitin-protein ligase complex which contains Elongin BC, CUL5, RBX1 and SOCS1. Interacts (via SH2 domain and SOCS box) with TRIM8. Interacts with CUL2. Interacts with AXL and FGFR3. Interacts with INSR. Interacts with TRIM8. Interacts with DCUN1D1. Interacts with IFNGR1. High expression in thymus. Lower expression in lung and spleen. Expressed in both Th1 and Th2 cells.

The protein localises to the nucleus. It localises to the cytoplasmic vesicle. The protein operates within protein modification; protein ubiquitination. Functionally, essential negative regulator of type I and type II interferon (IFN) signaling, as well as that of other cytokines, including IL2, IL4, IL6 and leukemia inhibitory factor (LIF). Downregulates cytokine signaling by inhibiting the JAK/STAT signaling pathway. Acts by binding to JAK proteins and to IFNGR1 and inhibiting their kinase activity. In vitro, suppresses Tec protein-tyrosine activity. Regulates IFN-gamma (IFNG)-mediated sensory neuron survival. Probable substrate recognition component of an ECS (Elongin BC-CUL2/5-SOCS-box protein) E3 ubiquitin ligase complex which mediates the ubiquitination and subsequent proteasomal degradation of target proteins. The sequence is that of Suppressor of cytokine signaling 1 from Mus musculus (Mouse).